An 87-amino-acid polypeptide reads, in one-letter code: Small polypeptide DEVIL 11 (87 aa).

The segment covering 1–11 (MASSSSLTRSG) has biased composition (polar residues). Residues 1-47 (MASSSSLTRSGSVHLDEKWKLSKKDGGASRITRSSSTSSSSFNGKKQ) form a disordered region. The segment covering 14–27 (HLDEKWKLSKKDGG) has biased composition (basic and acidic residues). Over residues 29–41 (SRITRSSSTSSSS) the composition is skewed to low complexity. The segment at 51-82 (AFTRKCARLVKEQRARFYIMRRCVIMLICWRD) is required for DVL/RTFL small polypeptide activity. The helical transmembrane segment at 64-80 (RARFYIMRRCVIMLICW) threads the bilayer. A glycan (N-linked (GlcNAc...) asparagine) is linked at asparagine 83.

The protein belongs to the DVL/RTFL small polypeptides family.

Its subcellular location is the cell membrane. Functionally, small polypeptide acting as a regulatory molecule which coordinates cellular responses required for differentiation, growth and development, probably by restricting polar cell proliferation in lateral organs and coordinating socket cell recruitment and differentiation at trichome sites. The polypeptide is Small polypeptide DEVIL 11 (Arabidopsis thaliana (Mouse-ear cress)).